The sequence spans 605 residues: Elongation factor 4 (605 aa).

One can recognise a tr-type G domain in the interval 4 to 186 (SATRNFCIIA…AIVARVPAPK (183 aa)). Residues 16–21 (DHGKST) and 133–136 (NKID) contribute to the GTP site.

Belongs to the TRAFAC class translation factor GTPase superfamily. Classic translation factor GTPase family. LepA subfamily.

It is found in the cell membrane. It carries out the reaction GTP + H2O = GDP + phosphate + H(+). Required for accurate and efficient protein synthesis under certain stress conditions. May act as a fidelity factor of the translation reaction, by catalyzing a one-codon backward translocation of tRNAs on improperly translocated ribosomes. Back-translocation proceeds from a post-translocation (POST) complex to a pre-translocation (PRE) complex, thus giving elongation factor G a second chance to translocate the tRNAs correctly. Binds to ribosomes in a GTP-dependent manner. The sequence is that of Elongation factor 4 from Dehalococcoides mccartyi (strain ATCC BAA-2266 / KCTC 15142 / 195) (Dehalococcoides ethenogenes (strain 195)).